The sequence spans 716 residues: Probable extracellular serine carboxypeptidase (716 aa).

Positions 1-17 are cleaved as a signal peptide; it reads MVKLTACLLLLVAAVQA. N-linked (GlcNAc...) asparagine glycosylation is found at Asn143 and Asn174. The Charge relay system role is filled by Ser188. N-linked (GlcNAc...) asparagine glycans are attached at residues Asn258 and Asn354. The Charge relay system role is filled by Asp466. 2 N-linked (GlcNAc...) asparagine glycosylation sites follow: Asn507 and Asn550. Residues 617–636 form a disordered region; the sequence is RDLAAQPSKSKKDRRGQQLS. A helical membrane pass occupies residues 652 to 672; that stretch reads LGFVSFLVFAFSSFTFIPDIE.

This sequence belongs to the peptidase S28 family.

The protein localises to the membrane. It is found in the secreted. This Arthroderma benhamiae (strain ATCC MYA-4681 / CBS 112371) (Trichophyton mentagrophytes) protein is Probable extracellular serine carboxypeptidase.